The sequence spans 252 residues: T-box transcription factor mls-1 (252 aa).

The segment at residues 40–210 (LWRRFHNLGT…SNPFAKGFRE (171 aa)) is a DNA-binding region (T-box).

May interact with unc-37.

It is found in the nucleus. Functionally, probable transcription factor required for the cell fate specification of non-striated uterine muscle precursor cells. Furthermore, may function with the transcriptional corepressor unc-37. This Caenorhabditis elegans protein is T-box transcription factor mls-1.